The primary structure comprises 306 residues: Homoserine kinase (306 aa).

90–100 (PLARGLGSSAS) provides a ligand contact to ATP.

Belongs to the GHMP kinase family. Homoserine kinase subfamily.

It localises to the cytoplasm. It carries out the reaction L-homoserine + ATP = O-phospho-L-homoserine + ADP + H(+). The protein operates within amino-acid biosynthesis; L-threonine biosynthesis; L-threonine from L-aspartate: step 4/5. Its function is as follows. Catalyzes the ATP-dependent phosphorylation of L-homoserine to L-homoserine phosphate. The polypeptide is Homoserine kinase (Staphylococcus epidermidis (strain ATCC 12228 / FDA PCI 1200)).